A 209-amino-acid chain; its full sequence is uncharacterized protein (209 aa).

Residues 41-76 adopt a coiled-coil conformation; sequence NVENLCLIRNKLKTDIENLLENKIDVENKLLVLRNQ.

This is an uncharacterized protein from Acanthamoeba polyphaga (Amoeba).